Reading from the N-terminus, the 554-residue chain is Formate--tetrahydrofolate ligase (554 aa).

Residue 64–71 (TPYGEGKT) coordinates ATP.

This sequence belongs to the formate--tetrahydrofolate ligase family.

The enzyme catalyses (6S)-5,6,7,8-tetrahydrofolate + formate + ATP = (6R)-10-formyltetrahydrofolate + ADP + phosphate. The protein operates within one-carbon metabolism; tetrahydrofolate interconversion. The sequence is that of Formate--tetrahydrofolate ligase from Caldicellulosiruptor saccharolyticus (strain ATCC 43494 / DSM 8903 / Tp8T 6331).